The following is a 1292-amino-acid chain: MTTTRRNKRNNKLYKNIKAIKLSIASNDTILNWSEGEVTKAETINYKSLKPEPGGLFDEAIFGPVKDYECACGKFKKIKYRGVRCDRCGVWVTESIVRRERMGHIALVSPVAHIWMSKELPSPSKISLVLNISYKEVEQVLYFVNYIVLDTGKIKDDKIMPFKFKEVLDLTGKGSLSTRQKMRRVIGYIFRNLIKSKSSEDYRKGKIFYESLKNSSLPFSLNDAFNYIKKYTGFRVGIGAEAILELLNKIDLNLEFSRLNDALRKAKKDSVEDAKVKKILRQLETISWFRNSKLHPKNMILHTVPVIPPDIRPIIQLDGAKFTTSDINNFYRRVIIRNDRLRRILEDGTVPSIVVNNEKRLLQESVDALFDNSSRHKPSLSKDKRSLKSLTDRLKGKQGLFRHNLLGKRVDYSGRSVIVVGPELKMYEVGIPALMILKLFKPFIIHGLINKFDENGNEIRPIAASIRQAEDMIKNQDDLIWGIVYDVIKDRPVLLNRAPTLHRLGIQAFEPRIVDGKAIRLHPLVTTAFNADFDGDQMAVHVPLSENAVNEARAVLLASKHILGLKDGRPIVTPTQDMVLGNYYLTTERKGQLGEGIIFSTVYEARAAYESQKVHLHAIVGISTKAFPNKKFACQGTLITTVGKIIFNDVLGNNVPYINDGEFDENACPEKFIVKQGEDVRQSILKHQIIPAFSKKVISKLIDLLYLLLEFKDLPKTLDNIKALGFKYSTFSSTTVSVFDIPKYTNKQNYFDSADQQVLKYKQFYNKGLLTDDERYKRVVKLWNNVKEKVSDEIQNLIKQEQYRDNSIVVMADSGARCNISNFTQLFGMRGLMSKSFNYERNNQSKIIKDTIEVPIKHSFFEGLTINEYFNSSYGARKGMTDTAMKTAKSGYMTRKLVDATHELIINHDDCGTRKGIVVEAIVETKTKSLIESLFDRIVNRYSITPIVDPETQKTIVEANSLITTQLAKQICATSIKEVLVRSVIYCERENGICQYCFGIDLSTGKLVELGTAVGVIAAQSIGEPGTQLTMRTFHTGGVSTENNLAQGFERLKQIFEVVTPKDFEKAVISEVKGTVKSITTVQNAQEVVIKSNVDERIYTIPFSAQIRVHVGDQVSPGSKITEGSVDIKQLLRIAGIQRVRQYMIVEIQKVYRIQGIDIADKYVEIIIRQLTNLLQVTDAGNSNLFVGQLVHSHYLNELNKSLLLAGKMPVIAINQVFGIDEAASKSNSFLSAASFQDTKKILTDAAVKNQVDYLLGLKENVIIGGKIPAGTGFLTDEELTFLGSKTVAEEY.

Positions 70, 72, 85, and 88 each coordinate Zn(2+). Mg(2+) contacts are provided by aspartate 532, aspartate 534, and aspartate 536. Zn(2+)-binding residues include cysteine 911, cysteine 987, cysteine 994, and cysteine 997.

Belongs to the RNA polymerase beta' chain family. The RNAP catalytic core consists of 2 alpha, 1 beta, 1 beta' and 1 omega subunit. When a sigma factor is associated with the core the holoenzyme is formed, which can initiate transcription. The cofactor is Mg(2+). Requires Zn(2+) as cofactor.

It catalyses the reaction RNA(n) + a ribonucleoside 5'-triphosphate = RNA(n+1) + diphosphate. Functionally, DNA-dependent RNA polymerase catalyzes the transcription of DNA into RNA using the four ribonucleoside triphosphates as substrates. The polypeptide is DNA-directed RNA polymerase subunit beta' (Mycoplasma genitalium (strain ATCC 33530 / DSM 19775 / NCTC 10195 / G37) (Mycoplasmoides genitalium)).